We begin with the raw amino-acid sequence, 297 residues long: Acetylglutamate kinase (297 aa).

Residues 72 to 73, Arg94, and Asn193 contribute to the substrate site; that span reads GG.

It belongs to the acetylglutamate kinase family. ArgB subfamily.

The protein resides in the cytoplasm. It carries out the reaction N-acetyl-L-glutamate + ATP = N-acetyl-L-glutamyl 5-phosphate + ADP. It participates in amino-acid biosynthesis; L-arginine biosynthesis; N(2)-acetyl-L-ornithine from L-glutamate: step 2/4. Catalyzes the ATP-dependent phosphorylation of N-acetyl-L-glutamate. The polypeptide is Acetylglutamate kinase (Mycobacterium leprae (strain TN)).